The following is a 119-amino-acid chain: Protein TusC (119 aa).

The protein belongs to the DsrF/TusC family. In terms of assembly, heterohexamer, formed by a dimer of trimers. The hexameric TusBCD complex contains 2 copies each of TusB, TusC and TusD. The TusBCD complex interacts with TusE.

It is found in the cytoplasm. Part of a sulfur-relay system required for 2-thiolation of 5-methylaminomethyl-2-thiouridine (mnm(5)s(2)U) at tRNA wobble positions. The sequence is that of Protein TusC from Buchnera aphidicola subsp. Schizaphis graminum (strain Sg).